The chain runs to 265 residues: Basic leucine zipper 6 (265 aa).

2 disordered regions span residues 1–24 (MAQL…SAGG) and 77–139 (LMSM…RDPK). Positions 85–97 (GGSSAPGSDNGGS) are enriched in low complexity. A compositionally biased stretch (polar residues) spans 122-132 (TQEQAAATSPT). In terms of domain architecture, bZIP spans 137–189 (DPKRVKRILANRQSAQRSRVRKLQYISELERSVTTLQNEVSVLSPRVAFLDQQ). Positions 139 to 158 (KRVKRILANRQSAQRSRVRK) are basic motif. Residues 165-186 (LERSVTTLQNEVSVLSPRVAFL) form a leucine-zipper region. The interval 239–265 (LSGGLAADHAHVHGGPPPVRAEKELMS) is disordered.

As to expression, expressed in roots, shoots and panicles.

It is found in the nucleus. Its function is as follows. Transcription regulator. This is Basic leucine zipper 6 (BZIP06) from Oryza sativa subsp. japonica (Rice).